A 580-amino-acid chain; its full sequence is Arginine--tRNA ligase (580 aa).

The 'HIGH' region motif lies at 131–141 (ANPTGPLHVGH).

Belongs to the class-I aminoacyl-tRNA synthetase family. Monomer.

It is found in the cytoplasm. It catalyses the reaction tRNA(Arg) + L-arginine + ATP = L-arginyl-tRNA(Arg) + AMP + diphosphate. The chain is Arginine--tRNA ligase from Roseobacter denitrificans (strain ATCC 33942 / OCh 114) (Erythrobacter sp. (strain OCh 114)).